A 102-amino-acid polypeptide reads, in one-letter code: NADH-quinone oxidoreductase subunit K (102 aa).

The next 3 helical transmembrane spans lie at 5-25 (LEHYLAVAAILFVTGIFGIFV), 31-51 (IVILMSIELMLLAVNINMVAF), and 66-86 (FVLTVAAAEAAIGLAILVVFF).

The protein belongs to the complex I subunit 4L family. In terms of assembly, NDH-1 is composed of 14 different subunits. Subunits NuoA, H, J, K, L, M, N constitute the membrane sector of the complex.

It localises to the cellular chromatophore membrane. It carries out the reaction a quinone + NADH + 5 H(+)(in) = a quinol + NAD(+) + 4 H(+)(out). NDH-1 shuttles electrons from NADH, via FMN and iron-sulfur (Fe-S) centers, to quinones in the respiratory chain. The immediate electron acceptor for the enzyme in this species is believed to be ubiquinone. Couples the redox reaction to proton translocation (for every two electrons transferred, four hydrogen ions are translocated across the cytoplasmic membrane), and thus conserves the redox energy in a proton gradient. In Rhodobacter capsulatus (Rhodopseudomonas capsulata), this protein is NADH-quinone oxidoreductase subunit K.